Reading from the N-terminus, the 119-residue chain is Holo-[acyl-carrier-protein] synthase (119 aa).

Residues aspartate 7 and glutamate 53 each contribute to the Mg(2+) site.

This sequence belongs to the P-Pant transferase superfamily. AcpS family. Requires Mg(2+) as cofactor.

Its subcellular location is the cytoplasm. It catalyses the reaction apo-[ACP] + CoA = holo-[ACP] + adenosine 3',5'-bisphosphate + H(+). In terms of biological role, transfers the 4'-phosphopantetheine moiety from coenzyme A to a Ser of acyl-carrier-protein. The chain is Holo-[acyl-carrier-protein] synthase from Dehalococcoides mccartyi (strain ATCC BAA-2266 / KCTC 15142 / 195) (Dehalococcoides ethenogenes (strain 195)).